We begin with the raw amino-acid sequence, 234 residues long: Phosphoglycolate phosphatase (234 aa).

D13 (nucleophile) is an active-site residue. The Mg(2+) site is built by D13, D15, and D175.

Belongs to the HAD-like hydrolase superfamily. CbbY/CbbZ/Gph/YieH family. As to quaternary structure, monomer. The cofactor is Mg(2+). Chloride serves as cofactor.

It catalyses the reaction 2-phosphoglycolate + H2O = glycolate + phosphate. It functions in the pathway organic acid metabolism; glycolate biosynthesis; glycolate from 2-phosphoglycolate: step 1/1. Specifically catalyzes the dephosphorylation of 2-phosphoglycolate. Is involved in the dissimilation of the intracellular 2-phosphoglycolate formed during the DNA repair of 3'-phosphoglycolate ends, a major class of DNA lesions induced by oxidative stress. This is Phosphoglycolate phosphatase from Pectobacterium atrosepticum (strain SCRI 1043 / ATCC BAA-672) (Erwinia carotovora subsp. atroseptica).